The sequence spans 141 residues: Large ribosomal subunit protein uL11 (141 aa).

It belongs to the universal ribosomal protein uL11 family. In terms of assembly, part of the ribosomal stalk of the 50S ribosomal subunit. Interacts with L10 and the large rRNA to form the base of the stalk. L10 forms an elongated spine to which L12 dimers bind in a sequential fashion forming a multimeric L10(L12)X complex. In terms of processing, one or more lysine residues are methylated.

Its function is as follows. Forms part of the ribosomal stalk which helps the ribosome interact with GTP-bound translation factors. This chain is Large ribosomal subunit protein uL11, found in Nostoc punctiforme (strain ATCC 29133 / PCC 73102).